The chain runs to 165 residues: Phosphopantetheine adenylyltransferase (165 aa).

Serine 11 provides a ligand contact to substrate. ATP-binding positions include 11-12 (SF) and histidine 19. Substrate is bound by residues lysine 43, threonine 76, and arginine 90. ATP contacts are provided by residues 91-93 (GIR), glutamate 101, and 126-132 (FSFISSS).

It belongs to the bacterial CoaD family. Homohexamer. Requires Mg(2+) as cofactor.

It is found in the cytoplasm. It carries out the reaction (R)-4'-phosphopantetheine + ATP + H(+) = 3'-dephospho-CoA + diphosphate. It functions in the pathway cofactor biosynthesis; coenzyme A biosynthesis; CoA from (R)-pantothenate: step 4/5. Reversibly transfers an adenylyl group from ATP to 4'-phosphopantetheine, yielding dephospho-CoA (dPCoA) and pyrophosphate. The chain is Phosphopantetheine adenylyltransferase from Latilactobacillus sakei subsp. sakei (strain 23K) (Lactobacillus sakei subsp. sakei).